Consider the following 201-residue polypeptide: Dephospho-CoA kinase (201 aa).

In terms of domain architecture, DPCK spans 3-201; the sequence is VIGLTGGIAS…WKERIEKNPR (199 aa). 11–16 lines the ATP pocket; sequence ASGKST.

The protein belongs to the CoaE family.

It is found in the cytoplasm. It carries out the reaction 3'-dephospho-CoA + ATP = ADP + CoA + H(+). The protein operates within cofactor biosynthesis; coenzyme A biosynthesis; CoA from (R)-pantothenate: step 5/5. Catalyzes the phosphorylation of the 3'-hydroxyl group of dephosphocoenzyme A to form coenzyme A. This Geobacter metallireducens (strain ATCC 53774 / DSM 7210 / GS-15) protein is Dephospho-CoA kinase.